Here is a 157-residue protein sequence, read N- to C-terminus: SsrA-binding protein (157 aa).

The tract at residues 133-157 (LHDKRETEKKRDWSREKGRLLRARG) is disordered. Positions 135–151 (DKRETEKKRDWSREKGR) are enriched in basic and acidic residues.

The protein belongs to the SmpB family.

The protein resides in the cytoplasm. Its function is as follows. Required for rescue of stalled ribosomes mediated by trans-translation. Binds to transfer-messenger RNA (tmRNA), required for stable association of tmRNA with ribosomes. tmRNA and SmpB together mimic tRNA shape, replacing the anticodon stem-loop with SmpB. tmRNA is encoded by the ssrA gene; the 2 termini fold to resemble tRNA(Ala) and it encodes a 'tag peptide', a short internal open reading frame. During trans-translation Ala-aminoacylated tmRNA acts like a tRNA, entering the A-site of stalled ribosomes, displacing the stalled mRNA. The ribosome then switches to translate the ORF on the tmRNA; the nascent peptide is terminated with the 'tag peptide' encoded by the tmRNA and targeted for degradation. The ribosome is freed to recommence translation, which seems to be the essential function of trans-translation. The polypeptide is SsrA-binding protein (Bradyrhizobium diazoefficiens (strain JCM 10833 / BCRC 13528 / IAM 13628 / NBRC 14792 / USDA 110)).